A 276-amino-acid chain; its full sequence is Short-chain dehydrogenase anuF (276 aa).

Isoleucine 18, aspartate 68, lysine 130, tyrosine 176, lysine 180, valine 209, and threonine 211 together coordinate NADP(+). Tyrosine 176 functions as the Proton acceptor in the catalytic mechanism. Tyrosine 176 serves as the catalytic Proton donor. Lysine 180 (lowers pKa of active site Tyr) is an active-site residue.

It belongs to the short-chain dehydrogenases/reductases (SDR) family.

The enzyme catalyses (2R,9S)-annullatin H + A = (2R)-annullatin F + AH2. Its function is as follows. Cytochrome P450 monooxygenase; part of the gene cluster that mediates the biosynthesis of annullatin D, an alkylated aromatic polyketide with a fused dihydrobenzofuran lactone ring system that exhibits potent agonistic activities toward the cannabinoid receptors. Within the pathway, anuF is involved in the formation of (2R)-annullatin F from the diastereomer of (2S,9S)-annullatin H (compound 12). The annullatin backbone 2-hydroxymethyl-3-pentylphenol is assembled from one acetyl-CoA starter unit and 5 malonyl-CoA elongation units by cooperation of the highly reducing polyketide synthase anuA, the short-chain dehydrogenase anuB and the oxidoreductase anuC, before being hydroxylated at the C-5 alkyl chain by the cytochrome P450 monooxygenase anuE to form (8S)-annullatin E. The prenyltransferase anuH subsequently installs one isoprenyl group at the benzene ring to form (8S)-annullatin J. Enzymatic or nonenzymatic dihydro-benzofuran ring formation between the prenyl and the phenolic hydroxyl groups in (8S)-annullatin J results in two diastereomers (2S,9S)-annullatin H and compound 12. The intermediate (2S,9S)-annullatin H is then converted to (2S,9S)-annullatin D by the FAD-linked oxidoreductase anuG-catalyzed five-member lactone ring formation. The isomer 12 acts as a substrate for the short-chain dehydrogenase anuF and is oxidized to (2R)-annullatin F, which is subsequently acetylated by an acetyltransferase leading to (2R)-annullatin G formation. The remaining enzymes identified within the cluster, anuD, anuI and anuJ, seem not to be involved in annullatin biosynthesis. This is Short-chain dehydrogenase anuF from Penicillium roqueforti (strain FM164).